Reading from the N-terminus, the 585-residue chain is Proline--tRNA ligase (585 aa).

Belongs to the class-II aminoacyl-tRNA synthetase family. ProS type 1 subfamily. In terms of assembly, homodimer.

Its subcellular location is the cytoplasm. The catalysed reaction is tRNA(Pro) + L-proline + ATP = L-prolyl-tRNA(Pro) + AMP + diphosphate. Its function is as follows. Catalyzes the attachment of proline to tRNA(Pro) in a two-step reaction: proline is first activated by ATP to form Pro-AMP and then transferred to the acceptor end of tRNA(Pro). As ProRS can inadvertently accommodate and process non-cognate amino acids such as alanine and cysteine, to avoid such errors it has two additional distinct editing activities against alanine. One activity is designated as 'pretransfer' editing and involves the tRNA(Pro)-independent hydrolysis of activated Ala-AMP. The other activity is designated 'posttransfer' editing and involves deacylation of mischarged Ala-tRNA(Pro). The misacylated Cys-tRNA(Pro) is not edited by ProRS. This Cutibacterium acnes (strain DSM 16379 / KPA171202) (Propionibacterium acnes) protein is Proline--tRNA ligase.